A 334-amino-acid polypeptide reads, in one-letter code: Meso-diaminopimelate D-dehydrogenase (334 aa).

Residues 16-19 (YGNL), 40-42 (TRR), 75-78 (CSGS), 98-100 (GFD), and 127-131 (CGWDP) each bind NADP(+). Substrate-binding positions include aspartate 100, aspartate 130, tryptophan 154, 160 to 161 (QG), threonine 179, arginine 205, histidine 255, and asparagine 284.

It belongs to the diaminopimelate dehydrogenase family. Homodimer.

It catalyses the reaction meso-2,6-diaminopimelate + NADP(+) + H2O = (S)-2-amino-6-oxoheptanedioate + NH4(+) + NADPH + H(+). It functions in the pathway amino-acid biosynthesis; L-lysine biosynthesis via DAP pathway; DL-2,6-diaminopimelate from (S)-tetrahydrodipicolinate: step 1/1. In terms of biological role, catalyzes the reversible NADPH-dependent reductive amination of L-2-amino-6-oxopimelate, the acyclic form of L-tetrahydrodipicolinate, to generate the meso compound, D,L-2,6-diaminopimelate. Probably plays a role in lysine biosynthesis. Exhibits a high substrate specificity for meso-2,6-diaminopimelate (m-DAP), since the activity with L,L-2,6-diaminopimelate is less than 5% of the activity observed with m-DAP. Can use NAD(+) only very poorly since the activity observed in the presence of NAD(+) is about 0.3% of that with NADP(+). This chain is Meso-diaminopimelate D-dehydrogenase (ddh), found in Acetivibrio thermocellus (strain ATCC 27405 / DSM 1237 / JCM 9322 / NBRC 103400 / NCIMB 10682 / NRRL B-4536 / VPI 7372) (Clostridium thermocellum).